The chain runs to 483 residues: Glutamyl-tRNA(Gln) amidotransferase subunit A (483 aa).

Residues K76 and S151 each act as charge relay system in the active site. The active-site Acyl-ester intermediate is S175.

This sequence belongs to the amidase family. GatA subfamily. As to quaternary structure, heterotrimer of A, B and C subunits.

It carries out the reaction L-glutamyl-tRNA(Gln) + L-glutamine + ATP + H2O = L-glutaminyl-tRNA(Gln) + L-glutamate + ADP + phosphate + H(+). Functionally, allows the formation of correctly charged Gln-tRNA(Gln) through the transamidation of misacylated Glu-tRNA(Gln) in organisms which lack glutaminyl-tRNA synthetase. The reaction takes place in the presence of glutamine and ATP through an activated gamma-phospho-Glu-tRNA(Gln). The chain is Glutamyl-tRNA(Gln) amidotransferase subunit A from Pseudomonas syringae pv. syringae (strain B728a).